Consider the following 501-residue polypeptide: NADH-quinone oxidoreductase subunit N (501 aa).

14 helical membrane passes run His-4–Val-24, Phe-34–Leu-54, Leu-80–Gly-100, Gly-112–Gly-132, Leu-134–Phe-154, Leu-167–Met-187, Pro-207–Phe-227, Pro-241–Tyr-261, Leu-278–Ala-298, Val-314–Leu-334, His-335–Trp-355, Met-376–Phe-396, Gly-409–Phe-429, and Pro-463–Phe-483.

This sequence belongs to the complex I subunit 2 family. NDH-1 is composed of 14 different subunits. Subunits NuoA, H, J, K, L, M, N constitute the membrane sector of the complex.

The protein resides in the cell membrane. It carries out the reaction a quinone + NADH + 5 H(+)(in) = a quinol + NAD(+) + 4 H(+)(out). In terms of biological role, NDH-1 shuttles electrons from NADH, via FMN and iron-sulfur (Fe-S) centers, to quinones in the respiratory chain. The immediate electron acceptor for the enzyme in this species is believed to be a menaquinone. Couples the redox reaction to proton translocation (for every two electrons transferred, four hydrogen ions are translocated across the cytoplasmic membrane), and thus conserves the redox energy in a proton gradient. In Desulforudis audaxviator (strain MP104C), this protein is NADH-quinone oxidoreductase subunit N.